Reading from the N-terminus, the 546-residue chain is 2-isopropylmalate synthase (546 aa).

Residues 5–274 form the Pyruvate carboxyltransferase domain; sequence ITIFDTTLRD…TADVHTEHLT (270 aa). The Mn(2+) site is built by D14, H209, H211, and N245. The tract at residues 415–546 is regulatory domain; it reads RLDQFSVHLS…QNGIMHTYGE (132 aa).

It belongs to the alpha-IPM synthase/homocitrate synthase family. LeuA type 1 subfamily. Homodimer. The cofactor is Mn(2+).

Its subcellular location is the cytoplasm. The enzyme catalyses 3-methyl-2-oxobutanoate + acetyl-CoA + H2O = (2S)-2-isopropylmalate + CoA + H(+). It functions in the pathway amino-acid biosynthesis; L-leucine biosynthesis; L-leucine from 3-methyl-2-oxobutanoate: step 1/4. In terms of biological role, catalyzes the condensation of the acetyl group of acetyl-CoA with 3-methyl-2-oxobutanoate (2-ketoisovalerate) to form 3-carboxy-3-hydroxy-4-methylpentanoate (2-isopropylmalate). This chain is 2-isopropylmalate synthase, found in Salinibacter ruber (strain M8).